The primary structure comprises 31 residues: Cliotide T14 (31 aa).

Residues 1 to 31 (DTIPCGESCVWIPCISSILGCSCKDKVCYHN) constitute a cross-link (cyclopeptide (Asp-Asn)). Disulfide bonds link cysteine 5/cysteine 21, cysteine 9/cysteine 23, and cysteine 14/cysteine 28.

In terms of processing, contains 3 disulfide bonds. This is a cyclic peptide. As to expression, expressed in seed but not in root nodules.

Probably participates in a plant defense mechanism. Not active against Gram-negative bacterium E.coli ATCC 700926 or Gram-positive bacterium S.aureus ATCC 12600 up to a concentration of 100 uM under low-salt conditions. This Clitoria ternatea (Butterfly pea) protein is Cliotide T14.